Here is a 984-residue protein sequence, read N- to C-terminus: Serine/threonine-protein kinase Nek9 (984 aa).

S2 is subject to N-acetylserine. S2, S13, S16, and S20 each carry phosphoserine. The segment at 14–43 (INSDFGSESGGGGDSGPGPSAVPGPRAGGG) is disordered. Y52 is modified (phosphotyrosine). The region spanning 52-308 (YIPIRVLGRG…ADALLDLPLL (257 aa)) is the Protein kinase domain. Residue 58–66 (LGRGAFGEA) participates in ATP binding. Position 76 is a phosphoserine (S76). Position 81 (K81) interacts with ATP. D176 acts as the Proton acceptor in catalysis. T210 is modified (phosphothreonine; by autocatalysis). A Phosphothreonine modification is found at T254. A Phosphoserine modification is found at S331. A Phosphothreonine modification is found at T333. 6 RCC1 repeats span residues 388–444 (KELY…VTDE), 445–498 (GQLY…LTRN), 499–550 (KEVY…LTQS), 551–615 (GKVL…IDER), 616–668 (GRLL…ATDD), and 669–726 (NHIF…IVEK). The tract at residues 732 to 896 (TIRSNSSGLS…GKALTSAACA (165 aa)) is interaction with NEK6. The residue at position 741 (S741) is a Phosphoserine. The tract at residues 744-790 (TVVQSSSPGGGIGGGGGGGGGGGGEEEDSQQESETPDPSGGFRGTME) is disordered. Over residues 751–766 (PGGGIGGGGGGGGGGG) the composition is skewed to gly residues. Acidic residues predominate over residues 767–778 (GEEEDSQQESET). 2 positions are modified to phosphoserine: S808 and S839. Residue T891 is modified to Phosphothreonine. A coiled-coil region spans residues 896–945 (ACSALQVEVDRLQALVLKCLEEQQKLQQENLQMFTQLQKLNKKLEGGQQV). Residues 940–984 (EGGQQVGMHSRGTQTAKEEMEMDPKPDLDSESWCLLGTDSCRPSL) form a disordered region. S949 is modified (phosphoserine). Basic and acidic residues predominate over residues 955–967 (AKEEMEMDPKPDL). The residue at position 983 (S983) is a Phosphoserine.

This sequence belongs to the protein kinase superfamily. NEK Ser/Thr protein kinase family. NIMA subfamily. Homodimer; homodimerization is required to activate NEK7. Binds to Ran GTPase. Has a greater affinity for Ran-GDP over Ran-GTP. Interacts with SSRP1 and SUPT16H, the 2 subunits of the FACT complex. Interacts with DYNLL1; phosphorylation at Ser-949 strongly reduces DYNLL1 binding. The cofactor is Mg(2+). Post-translationally, autophosphorylated on serine and threonine residues. When complexed with FACT, exhibits markedly elevated phosphorylation on Thr-210. During mitosis, not phosphorylated on Thr-210. Phosphorylated by CDK1 in vitro.

Its subcellular location is the cytoplasm. It localises to the nucleus. The catalysed reaction is L-seryl-[protein] + ATP = O-phospho-L-seryl-[protein] + ADP + H(+). It carries out the reaction L-threonyl-[protein] + ATP = O-phospho-L-threonyl-[protein] + ADP + H(+). Activated during mitosis by intramolecular autophosphorylation. Activity and autophosphorylation is activated by manganese &gt;&gt; magnesium ions. It is not cell-cycle regulated but activity is higher in G0-arrested cells. In terms of biological role, pleiotropic regulator of mitotic progression, participating in the control of spindle dynamics and chromosome separation. Phosphorylates different histones, myelin basic protein, beta-casein, and BICD2. Phosphorylates histone H3 on serine and threonine residues and beta-casein on serine residues. Important for G1/S transition and S phase progression. Phosphorylates NEK6 and NEK7 and stimulates their activity by releasing the autoinhibitory functions of Tyr-108 and Tyr-97 respectively. This Mus musculus (Mouse) protein is Serine/threonine-protein kinase Nek9.